The sequence spans 427 residues: Serine--tRNA ligase (427 aa).

231–233 (TAE) contributes to the L-serine binding site. An ATP-binding site is contributed by 262–264 (RSE). L-serine is bound at residue Glu-285. 349 to 352 (EISS) contacts ATP. Residue Ser-385 participates in L-serine binding.

Belongs to the class-II aminoacyl-tRNA synthetase family. Type-1 seryl-tRNA synthetase subfamily. In terms of assembly, homodimer. The tRNA molecule binds across the dimer.

The protein localises to the cytoplasm. The catalysed reaction is tRNA(Ser) + L-serine + ATP = L-seryl-tRNA(Ser) + AMP + diphosphate + H(+). It catalyses the reaction tRNA(Sec) + L-serine + ATP = L-seryl-tRNA(Sec) + AMP + diphosphate + H(+). It participates in aminoacyl-tRNA biosynthesis; selenocysteinyl-tRNA(Sec) biosynthesis; L-seryl-tRNA(Sec) from L-serine and tRNA(Sec): step 1/1. Its function is as follows. Catalyzes the attachment of serine to tRNA(Ser). Is also able to aminoacylate tRNA(Sec) with serine, to form the misacylated tRNA L-seryl-tRNA(Sec), which will be further converted into selenocysteinyl-tRNA(Sec). The polypeptide is Serine--tRNA ligase (Staphylococcus saprophyticus subsp. saprophyticus (strain ATCC 15305 / DSM 20229 / NCIMB 8711 / NCTC 7292 / S-41)).